The primary structure comprises 629 residues: MTIRLLPPVLVNRIAAGEVVERPASAVKELVENAIDAGASRIDITMTDGGRARILVVDDGRGMDPGELSLAVERHATSKLPGDDLLDIHTLGFRGEALPSIGSVARLTLTSRAAGAGDAWALTVEGGAKGEPEPASHPQGTRVEVRDLFYATPARLKFLKAPRTEQMHAVDVVHRLAMAHPAVGFTLSDGTRQQIRLSGAQGELFEARLTRLGAILGREFSDNAIAIEAEREGIRLTGHAALPTYNKATSAGQYLFVNGRPVRDKLLHGAVRGAYQDVLAHDRNAVLALYLDLPPEMVDVNVHPAKAEVRFRDPGLVRGLIIGALRHALAAAGHRASSTVSLAALGALRPAQGSGAPALPWGAGGYGGGASHPGLEERRSAYAAQAPAGTPDPWAGRGMGAGGGSGQAAMAWLAGAPPAAPRLAGEPEAPPTGAEDFPLGAARGQIHDTYIIAQTRDGVVIVDQHAAHERLVMERMKAALAERGEVARQILLLPEVVELDEPGAVRVATAAAELAKLGLVVEGFGPGAVVVREVPALLGDTDVKGLVADLAEGLAEWGTAQALEDRLGDVVATMACHGSVRAGRRLRIEEMNALLRDMERTPRAGQCNHGRPTYVELRLGDIERLFGRR.

Belongs to the DNA mismatch repair MutL/HexB family.

Functionally, this protein is involved in the repair of mismatches in DNA. It is required for dam-dependent methyl-directed DNA mismatch repair. May act as a 'molecular matchmaker', a protein that promotes the formation of a stable complex between two or more DNA-binding proteins in an ATP-dependent manner without itself being part of a final effector complex. The protein is DNA mismatch repair protein MutL of Rhodospirillum rubrum (strain ATCC 11170 / ATH 1.1.1 / DSM 467 / LMG 4362 / NCIMB 8255 / S1).